Reading from the N-terminus, the 228-residue chain is Putative L-ribulose-5-phosphate 4-epimerase UlaF (228 aa).

Residues 26 to 27 (GN), 43 to 44 (SG), and 72 to 73 (SS) each bind substrate. The Zn(2+) site is built by Asp74, His93, and His95. Residue Asp118 is the Proton donor/acceptor of the active site. Residue His167 participates in Zn(2+) binding. Tyr225 functions as the Proton donor/acceptor in the catalytic mechanism.

Belongs to the aldolase class II family. AraD/FucA subfamily. The cofactor is Zn(2+).

The enzyme catalyses L-ribulose 5-phosphate = D-xylulose 5-phosphate. It functions in the pathway cofactor degradation; L-ascorbate degradation; D-xylulose 5-phosphate from L-ascorbate: step 4/4. Catalyzes the isomerization of L-ribulose 5-phosphate to D-xylulose 5-phosphate. Is involved in the anaerobic L-ascorbate utilization. The protein is Putative L-ribulose-5-phosphate 4-epimerase UlaF of Shigella boydii serotype 4 (strain Sb227).